The chain runs to 1115 residues: Receptor-type tyrosine-protein phosphatase H (1115 aa).

Positions 1-27 (MAGAGGGLGVWGNLVLLGLCSWTGARA) are cleaved as a signal peptide. Over 28-754 (PAPNPGRNLT…VVCHTESAGV (727 aa)) the chain is Extracellular. 8 consecutive Fibronectin type-III domains span residues 32–121 (PGRN…APNP), 122–209 (VRNL…TAHN), 210–299 (PVRN…APNP), 300–387 (VRNL…TAPN), 388–477 (PVRN…VPNA), 478–563 (VTSL…TAAT), 564–666 (APNE…TYPD), and 665–749 (PDTV…VCHT). Asparagine 35, asparagine 83, asparagine 172, asparagine 256, asparagine 285, asparagine 350, asparagine 434, asparagine 468, asparagine 556, and asparagine 642 each carry an N-linked (GlcNAc...) asparagine glycan. A helical membrane pass occupies residues 755–775 (IAGAFVGILLFLILVGLLIFF). At 776–1115 (LKRRNKKKQQ…AAIQAHKLEV (340 aa)) the chain is on the cytoplasmic side. Positions 820-1079 (FADEYQQLSL…VFLHQCILRF (260 aa)) constitute a Tyrosine-protein phosphatase domain. Residue cysteine 1020 is the Phosphocysteine intermediate of the active site. 2 positions are modified to phosphotyrosine: tyrosine 1094 and tyrosine 1102.

This sequence belongs to the protein-tyrosine phosphatase family. Receptor class 3 subfamily. In terms of assembly, homodimer; disulfide-linked. Interacts with LCK. Interacts (phosphorylated form) with GRB2 (via SH2 domain). Interacts (phosphorylated form) with FYN (via SH2 domain). Interacts (via extracellular domain) with CEACAM20 (via extracellular domain); the interaction dephosphorylates CEACAM20. Expressed at high levels in the brain, spleen and liver and at lower levels in the heart and stomach. Expressed in pancreatic and colorectal cancer cells, but not in normal pancreas or colon. Expression in hepatocellular carcinoma is related to the differentiation status of the tumor and expression is inversely related to tumor aggressiveness.

It localises to the cell projection. The protein resides in the microvillus membrane. It is found in the apical cell membrane. Its subcellular location is the cytoplasm. The enzyme catalyses O-phospho-L-tyrosyl-[protein] + H2O = L-tyrosyl-[protein] + phosphate. Regulated by reversible dimerization. Dimerization reduces its catalytic activity. Its function is as follows. Protein phosphatase that may contribute to contact inhibition of cell growth and motility by mediating the dephosphorylation of focal adhesion-associated substrates and thus negatively regulating integrin-promoted signaling processes. Induces apoptotic cell death by at least two distinct mechanisms: inhibition of cell survival signaling mediated by PI 3-kinase, Akt, and ILK and activation of a caspase-dependent proapoptotic pathway. Inhibits the basal activity of LCK and its activation in response to TCR stimulation and TCR-induced activation of MAP kinase and surface expression of CD69. Inhibits TCR-induced tyrosine phosphorylation of LAT and ZAP70. Inhibits both basal activity of DOK1 and its CD2-induced tyrosine phosphorylation. Induces dephosphorylation of BCAR1, focal adhesion kinase and SRC. Reduces migratory activity of activity of Jurkat cells. Reduces tyrosine phosphorylation of CEACAM20 and thereby contributes to suppress the intestinal immune response CEACAM20. The protein is Receptor-type tyrosine-protein phosphatase H (PTPRH) of Homo sapiens (Human).